We begin with the raw amino-acid sequence, 280 residues long: L-aspartate dehydrogenase (280 aa).

NAD(+) contacts are provided by Ala134 and Asn202. The active site involves His232.

It belongs to the L-aspartate dehydrogenase family.

It carries out the reaction L-aspartate + NADP(+) + H2O = oxaloacetate + NH4(+) + NADPH + H(+). The enzyme catalyses L-aspartate + NAD(+) + H2O = oxaloacetate + NH4(+) + NADH + H(+). Its pathway is cofactor biosynthesis; NAD(+) biosynthesis; iminoaspartate from L-aspartate (dehydrogenase route): step 1/1. Its function is as follows. Specifically catalyzes the NAD or NADP-dependent dehydrogenation of L-aspartate to iminoaspartate. In Bradyrhizobium diazoefficiens (strain JCM 10833 / BCRC 13528 / IAM 13628 / NBRC 14792 / USDA 110), this protein is L-aspartate dehydrogenase.